A 223-amino-acid chain; its full sequence is Killer cell lectin-like receptor subfamily B member 1B allele B (223 aa).

The Cytoplasmic portion of the chain corresponds to 1 to 45 (MDTAVVYADLHLARTGEPKHKSPPSLSPDTCQCPRWHRLALKLGC). Residues 5–10 (VVYADL) carry the ITIM motif motif. The LCK-binding motif signature appears at 31–34 (CQCP). Residues 46–66 (ACLILLVLSVIGLGVLVLTLL) form a helical; Signal-anchor for type II membrane protein membrane-spanning segment. The Extracellular segment spans residues 67–223 (QKPLIQNSPA…LKCECMCNGS (157 aa)). Positions 101-211 (HQDKCFHVSQ…CDSDNLWICQ (111 aa)) constitute a C-type lectin domain. Disulfide bonds link Cys-122-Cys-210 and Cys-189-Cys-202.

Homodimer; disulfide-linked. Interacts with tyrosine kinase LCK. Binds PTPN6/SHP-1 in a phosphorylation-dependent manner. Expressed in a subset of natural killer cells.

The protein localises to the membrane. Receptor for CLEC2D/OCIL. Ligand-binding contributes to inhibition of cytotoxic natural killer (NK) cells. May mediate MHC class I-independent 'missing-self' recognition of allografts, tumor cells and virus-infected cells. The polypeptide is Killer cell lectin-like receptor subfamily B member 1B allele B (Rattus norvegicus (Rat)).